The sequence spans 261 residues: 5-oxoprolinase subunit A (261 aa).

This sequence belongs to the LamB/PxpA family. As to quaternary structure, forms a complex composed of PxpA, PxpB and PxpC.

It carries out the reaction 5-oxo-L-proline + ATP + 2 H2O = L-glutamate + ADP + phosphate + H(+). Catalyzes the cleavage of 5-oxoproline to form L-glutamate coupled to the hydrolysis of ATP to ADP and inorganic phosphate. The sequence is that of 5-oxoprolinase subunit A from Symbiobacterium thermophilum (strain DSM 24528 / JCM 14929 / IAM 14863 / T).